A 458-amino-acid polypeptide reads, in one-letter code: Probable M18 family aminopeptidase 1 (458 aa).

Residues His-95, His-170, and His-434 each coordinate Zn(2+).

Belongs to the peptidase M18 family. It depends on Zn(2+) as a cofactor.

The sequence is that of Probable M18 family aminopeptidase 1 from Borrelia garinii subsp. bavariensis (strain ATCC BAA-2496 / DSM 23469 / PBi) (Borreliella bavariensis).